A 1647-amino-acid polypeptide reads, in one-letter code: MVQKKKFCPRLLDYLVIVGARHPSSDSVAQTPELLRRYPLEDHTEFPLPPDVVFFCQPEGCLSVRQRRMSLRDDTSFVFTLTDKDTGVTRYGICVNFYRSFQKRISKEKGEGGAGSRGKEGTHATCASEEGGTESSESGSSLQPLSADSTPDVNQSPRGKRRAKAGSRSRNSTLTSLCVLSHYPFFSTFRECLYTLKRLVDCCSERLLGKKLGIPRGVQRDTMWRIFTGSLLVEEKSSALLHDLREIEAWIYRLLRSPVPVSGQKRVDIEVLPQELQPALTFALPDPSRFTLVDFPLHLPLELLGVDACLQVLTCILLEHKVVLQSRDYNALSMSVMAFVAMIYPLEYMFPVIPLLPTCMASAEQLLLAPTPYIIGVPASFFLYKLDFKMPDDVWLVDLDSNRVIAPTNAEVLPILPEPESLELKKHLKQALASMSLNTQPILNLEKFHEGQEIPLLLGRPSNDLQSTPSTEFNPLIYGNDVDSVDVATRVAMVRFFNSANVLQGFQMHTRTLRLFPRPVVAFQAGSFLASRPRQTPFAEKLARTQAVEYFGEWILNPTNYAFQRIHNNMFDPALIGDKPKWYAHQLQPIHYRVYDSNSQLAEALSVPPERDSDSEPTDDSGSDSMDYDDSSSSYSSLGDFVSEMMKCDINGDTPNVDPLTHAALGDASEVEIDELQNQKEAEEPGPDSENSQENPPLRSSSSTTASSSPSTVIHGANSEPADSTEMDDKAAVGVSKPLPSVPPSIGKSNVDRRQAEIGEGSVRRRIYDNPYFEPQYGFPPEEDEDEQGESYTPRFSQHVSGNRAQKLLRPNSLRLASDSDAESDSRASSPNSTVSNTSTEGFGGIMSFASSLYRNHSTSFSLSNLTLPTKGAREKATPFPSLKVFGLNTLMEIVTEAGPGSGEGNRRALVDQKSSVIKHSPTVKREPPSPQGRSSNSSENQQFLKEVVHSVLDGQGVGWLNMKKVRRLLESEQLRVFVLSKLNRMVQSEDDARQDIIPDVEISRKVYKGMLDLLKCTVLSLEQSYAHAGLGGMASIFGLLEIAQTHYYSKEPDKRKRSPTESVNTPVGKDPGLAGRGDPKAMAQLRVPQLGPRAPSATGKGPKELDTRSLKEENFIASIELWNKHQEVKKQKALEKQRPEVIKPVFDLGETEEKKSQISADSGVSLTSSSQRTDQDSVIGVSPAVMIRSSSQDSEVSTVVSNSSGETLGADSDLSSNAGDGPGGEGSVHLASSRGTLSDSEIETNSATSTIFGKAHSLKPSIKEKLAGSPIRTSEDVSQRVYLYEGLLGRDKGSMWDQLEDAAMETFSISKERSTLWDQMQFWEDAFLDAVMLEREGMGMDQGPQEMIDRYLSLGEHDRKRLEDDEDRLLATLLHNLISYMLLMKVNKNDIRKKVRRLMGKSHIGLVYSQQINEVLDQLANLNGRDLSIWSSGSRHMKKQTFVVHAGTDTNGDIFFMEVCDDCVVLRSNIGTVYERWWYEKLINMTYCPKTKVLCLWRRNGSETQLNKFYTKKCRELYYCVKDSMERAAARQQSIKPGPELGGEFPVQDLKTGEGGLLQVTLEGINLKFMHNQVFIELNHIKKCNTVRGVFVLEEFVPEIKEVVSHKYKTPMAHEICYSVLCLFSYVAAVHSSEEDLRTPPRPVSS.

The 255-residue stretch at 14–268 (YLVIVGARHP…VPVSGQKRVD (255 aa)) folds into the uDENN domain. Residues 108 to 122 (EKGEGGAGSRGKEGT) show a composition bias toward basic and acidic residues. Residues 108 to 168 (EKGEGGAGSR…GKRRAKAGSR (61 aa)) are disordered. Residues 128-141 (SEEGGTESSESGSS) are compositionally biased toward low complexity. Polar residues predominate over residues 142-157 (LQPLSADSTPDVNQSP). Ser156 carries the post-translational modification Phosphoserine. The span at 158-167 (RGKRRAKAGS) shows a compositional bias: basic residues. The 141-residue stretch at 289–429 (RFTLVDFPLH…ESLELKKHLK (141 aa)) folds into the cDENN domain. Residues 431–565 (ALASMSLNTQ…LNPTNYAFQR (135 aa)) form the dDENN domain. Disordered stretches follow at residues 604-636 (ALSV…SSYS) and 678-842 (NQKE…STEG). Over residues 615–630 (SEPTDDSGSDSMDYDD) the composition is skewed to acidic residues. Phosphoserine is present on residues Ser689 and Ser692. Residues 689–699 (SENSQENPPLR) show a composition bias toward polar residues. Positions 700-712 (SSSSTTASSSPST) are enriched in low complexity. A compositionally biased stretch (basic and acidic residues) spans 750–768 (NVDRRQAEIGEGSVRRRIY). Residues 790–804 (ESYTPRFSQHVSGNR) are compositionally biased toward polar residues. Residues Ser813, Ser818, and Ser820 each carry the phosphoserine modification. Low complexity predominate over residues 827-840 (RASSPNSTVSNTST). Residues Ser858, Ser862, Ser916, Ser921, and Ser930 each carry the phosphoserine modification. Disordered stretches follow at residues 913 to 941 (QKSS…SSEN), 1051 to 1110 (KEPD…DTRS), and 1146 to 1243 (VFDL…DSEI). Residues 932 to 941 (QGRSSNSSEN) are compositionally biased toward polar residues. Residue Ser1059 is modified to Phosphoserine. Phosphothreonine occurs at positions 1061 and 1066. Phosphoserine is present on Ser1110. Composition is skewed to polar residues over residues 1158–1173 (QISA…SSQR), 1189–1207 (RSSS…SSGE), and 1234–1243 (SRGTLSDSEI). Thr1237 bears the Phosphothreonine mark. A phosphoserine mark is found at Ser1239 and Ser1270. A Death domain is found at 1340-1415 (GMDQGPQEMI…GLVYSQQINE (76 aa)).

The protein belongs to the MADD family. In terms of assembly, interacts (via death domain) with TNFRSF1A (via death domain). Interacts with PIDD1. Interacts with YWHAZ. Interacts (via death domain) with KIF1B; links the motor KIF1B to Rab3-carrying vesicles in anterograde synaptic vesicle transport. Interacts with KIF1A. Interacts (via uDENN domain) with RAB3A, RAB3B, RAB3C and RAB3D; the GTP-bound form of the Rab proteins is preferred for interaction. As to expression, expressed in testis, ovary, brain and heart. Expressed in spleen, thymus, prostate, testis, ovary, small instestine and colon. Expressed in liver. Not detected in the brain, breast, kidney, lung, ovary, pancreas, testis, uterus, stomach and thyroid. In terms of tissue distribution, expressed in the brain, breast, kidney, lung, ovary, pancreas, testis, uterus, stomach and thyroid.

Its subcellular location is the cell membrane. The protein resides in the cytoplasm. It localises to the cell projection. The protein localises to the axon. Its function is as follows. Guanyl-nucleotide exchange factor that regulates small GTPases of the Rab family. Converts GDP-bound inactive form of RAB27A and RAB27B to the GTP-bound active forms. Converts GDP-bound inactive form of RAB3A, RAB3C and RAB3D to the GTP-bound active forms, GTPases involved in synaptic vesicle exocytosis and vesicle secretion. Plays a role in synaptic vesicle formation and in vesicle trafficking at the neuromuscular junction. Involved in up-regulating a post-docking step of synaptic exocytosis in central synapses. Probably by binding to the motor proteins KIF1B and KIF1A, mediates motor-dependent transport of GTP-RAB3A-positive vesicles to the presynaptic nerve terminals. Plays a role in TNFA-mediated activation of the MAPK pathway, including ERK1/2. May link TNFRSF1A with MAP kinase activation. May be involved in the regulation of TNFA-induced apoptosis. The protein is MAP kinase-activating death domain protein of Homo sapiens (Human).